The chain runs to 385 residues: uncharacterized protein (385 aa).

This sequence belongs to the mimivirus L17x/L18x family.

This is an uncharacterized protein from Acanthamoeba polyphaga mimivirus (APMV).